A 310-amino-acid chain; its full sequence is Lipoyl synthase (310 aa).

[4Fe-4S] cluster contacts are provided by Cys61, Cys66, Cys72, Cys87, Cys91, Cys94, and Ser300. A Radical SAM core domain is found at 73 to 289 (FNNGTATFMI…EYIALSLGFS (217 aa)).

The protein belongs to the radical SAM superfamily. Lipoyl synthase family. The cofactor is [4Fe-4S] cluster.

It is found in the cytoplasm. The enzyme catalyses [[Fe-S] cluster scaffold protein carrying a second [4Fe-4S](2+) cluster] + N(6)-octanoyl-L-lysyl-[protein] + 2 oxidized [2Fe-2S]-[ferredoxin] + 2 S-adenosyl-L-methionine + 4 H(+) = [[Fe-S] cluster scaffold protein] + N(6)-[(R)-dihydrolipoyl]-L-lysyl-[protein] + 4 Fe(3+) + 2 hydrogen sulfide + 2 5'-deoxyadenosine + 2 L-methionine + 2 reduced [2Fe-2S]-[ferredoxin]. It participates in protein modification; protein lipoylation via endogenous pathway; protein N(6)-(lipoyl)lysine from octanoyl-[acyl-carrier-protein]: step 2/2. Functionally, catalyzes the radical-mediated insertion of two sulfur atoms into the C-6 and C-8 positions of the octanoyl moiety bound to the lipoyl domains of lipoate-dependent enzymes, thereby converting the octanoylated domains into lipoylated derivatives. In Buchnera aphidicola subsp. Cinara cedri (strain Cc), this protein is Lipoyl synthase.